A 704-amino-acid polypeptide reads, in one-letter code: Rabphilin-3A (704 aa).

Residues 1 to 12 (MTDTVFSSSSSR) show a composition bias toward polar residues. The tract at residues 1–52 (MTDTVFSSSSSRWMCPSDRPLQSNDKEQLQTGWSVHPSGQPDRQRKQEELTD) is disordered. One can recognise a RabBD domain in the interval 44-161 (QRKQEELTDE…KRSGAWFFKG (118 aa)). The FYVE-type zinc finger occupies 92–149 (GDGVNRCILCGEQLGMLGSACVVCEDCKKNVCTKCGVETSNNRPHPVWLCKICIEQRE). Zn(2+) contacts are provided by cysteine 98, cysteine 101, cysteine 115, cysteine 118, cysteine 123, cysteine 126, cysteine 141, and cysteine 144. The disordered stretch occupies residues 167–398 (LPQPMPIKKN…EEEANSYDSD (232 aa)). Residues 205–214 (TRGDTEDRRG) show a composition bias toward basic and acidic residues. Residue arginine 229 is modified to Omega-N-methylarginine. Serine 277 is subject to Phosphoserine. Over residues 279-290 (QASRPAPASMQS) the composition is skewed to low complexity. Positions 291-310 (PAPPQPGQPGPPGGSRPSPG) are enriched in pro residues. Positions 366 to 380 (QASAAAPQPVVASAR) are enriched in low complexity. Acidic residues predominate over residues 385 to 398 (PEEDEEEANSYDSD). The region spanning 402-524 (TLGALEFSLL…KPNQRKNFNI (123 aa)) is the C2 1 domain. Residues methionine 432, aspartate 433, aspartate 439, aspartate 494, glutamate 495, aspartate 496, glutamate 502, glutamate 549, aspartate 591, aspartate 597, aspartate 651, tyrosine 652, aspartate 653, and aspartate 659 each coordinate Ca(2+). One can recognise a C2 2 domain in the interval 560–693 (ERGKILVSLM…NKDKKIERWH (134 aa)). 2 positions are modified to phosphoserine: serine 702 and serine 703.

Interacts with RAB3B, RAB3C, RAB3D, RAB8A, RAB27A and RAB27B. Interacts with RAB3A; this interaction recruits RPH3A to synaptic vesicules. Interacts (via C2B domain) with SNAP25. Interacts with deubiquitinating enzyme CAND1; this interaction results in the deubiquitination of RPH3A. Interacts with GRIN2A and DLG4; this ternary complex regulates NMDA receptor composition at postsynaptic membranes. Interacts with SNCA. Ca(2+) serves as cofactor. Ubiquitinated. Deubiquitinated by CAND1 to prevent its degradation. Specifically expressed in brain.

The protein resides in the cytoplasmic vesicle. It is found in the secretory vesicle. It localises to the synaptic vesicle membrane. Its subcellular location is the cell projection. The protein localises to the dendritic spine. The protein resides in the postsynaptic cell membrane. It is found in the membrane. In terms of biological role, plays an essential role in docking and fusion steps of regulated exocytosis. At the presynaptic level, RPH3A is recruited by RAB3A to the synaptic vesicle membrane in a GTP-dependent manner where it modulates synaptic vesicle trafficking and calcium-triggered neurotransmitter release. In the post-synaptic compartment, forms a ternary complex with GRIN2A and DLG4 and regulates NMDA receptor stability. Also plays a role in the exocytosis of arginine vasopressin hormone. This Bos taurus (Bovine) protein is Rabphilin-3A (RPH3A).